The chain runs to 210 residues: Holliday junction resolvase RecU (210 aa).

Residues 1–34 (MAFHYPNGQPYSNHETKQPKKQGRHTSPTTLYGK) form a disordered region. Mg(2+) contacts are provided by threonine 90, aspartate 92, glutamate 105, and glutamine 124.

This sequence belongs to the RecU family. Mg(2+) serves as cofactor.

The protein localises to the cytoplasm. It catalyses the reaction Endonucleolytic cleavage at a junction such as a reciprocal single-stranded crossover between two homologous DNA duplexes (Holliday junction).. In terms of biological role, endonuclease that resolves Holliday junction intermediates in genetic recombination. Cleaves mobile four-strand junctions by introducing symmetrical nicks in paired strands. Promotes annealing of linear ssDNA with homologous dsDNA. Required for DNA repair, homologous recombination and chromosome segregation. This chain is Holliday junction resolvase RecU, found in Latilactobacillus sakei subsp. sakei (strain 23K) (Lactobacillus sakei subsp. sakei).